The chain runs to 355 residues: Alanine racemase (355 aa).

Residue lysine 34 is the Proton acceptor; specific for D-alanine of the active site. Lysine 34 is subject to N6-(pyridoxal phosphate)lysine. Arginine 133 is a binding site for substrate. The Proton acceptor; specific for L-alanine role is filled by tyrosine 249. A substrate-binding site is contributed by methionine 297.

It belongs to the alanine racemase family. Pyridoxal 5'-phosphate serves as cofactor.

The enzyme catalyses L-alanine = D-alanine. It functions in the pathway amino-acid biosynthesis; D-alanine biosynthesis; D-alanine from L-alanine: step 1/1. In terms of biological role, catalyzes the interconversion of L-alanine and D-alanine. May also act on other amino acids. The sequence is that of Alanine racemase (alr) from Rickettsia rickettsii (strain Sheila Smith).